We begin with the raw amino-acid sequence, 405 residues long: S-adenosylmethionine synthase (405 aa).

Histidine 19 serves as a coordination point for ATP. Aspartate 21 serves as a coordination point for Mg(2+). Residue glutamate 47 participates in K(+) binding. Residues glutamate 60 and glutamine 103 each contribute to the L-methionine site. A flexible loop region spans residues 103–113 (QSADIAQGVDK). ATP-binding positions include 179–181 (DGK), 246–247 (RF), aspartate 255, 261–262 (RK), alanine 278, and lysine 282. Aspartate 255 lines the L-methionine pocket. Lysine 286 serves as a coordination point for L-methionine.

The protein belongs to the AdoMet synthase family. In terms of assembly, homotetramer; dimer of dimers. Mg(2+) is required as a cofactor. Requires K(+) as cofactor.

The protein resides in the cytoplasm. The catalysed reaction is L-methionine + ATP + H2O = S-adenosyl-L-methionine + phosphate + diphosphate. The protein operates within amino-acid biosynthesis; S-adenosyl-L-methionine biosynthesis; S-adenosyl-L-methionine from L-methionine: step 1/1. In terms of biological role, catalyzes the formation of S-adenosylmethionine (AdoMet) from methionine and ATP. The overall synthetic reaction is composed of two sequential steps, AdoMet formation and the subsequent tripolyphosphate hydrolysis which occurs prior to release of AdoMet from the enzyme. This Shouchella clausii (strain KSM-K16) (Alkalihalobacillus clausii) protein is S-adenosylmethionine synthase.